Reading from the N-terminus, the 124-residue chain is Cholera enterotoxin subunit B (124 aa).

The signal sequence occupies residues 1-21; that stretch reads MIKLKFGVFFTVLLSSAYAHG. The cysteines at positions 30 and 107 are disulfide-linked.

As to quaternary structure, the holotoxin (choleragen) consists of a pentameric ring of B subunits whose central pore is occupied by the A subunit. The A subunit contains two chains, A1 and A2, linked by a disulfide bridge.

The protein resides in the secreted. It is found in the host cell membrane. The B subunit pentameric ring directs the A subunit to its target by binding to the GM1 gangliosides present on the surface of the intestinal epithelial cells. It can bind five GM1 gangliosides. It has no toxic activity by itself. The sequence is that of Cholera enterotoxin subunit B (ctxB) from Vibrio cholerae serotype O1 (strain ATCC 39315 / El Tor Inaba N16961).